The chain runs to 367 residues: D-alanine--D-alanine ligase (367 aa).

Positions 150 to 357 constitute an ATP-grasp domain; that stretch reads KKLLASAGLP…YPTLLATMVE (208 aa). ATP is bound at residue 178-233; it reads RERLGLPVFVKPSRGGSSIGVSRVTAWDELPAAIELARRHDPKVIIEAAVPGRELE. D312, E324, and N326 together coordinate Mg(2+).

This sequence belongs to the D-alanine--D-alanine ligase family. Requires Mg(2+) as cofactor. The cofactor is Mn(2+).

Its subcellular location is the cytoplasm. It catalyses the reaction 2 D-alanine + ATP = D-alanyl-D-alanine + ADP + phosphate + H(+). It functions in the pathway cell wall biogenesis; peptidoglycan biosynthesis. Functionally, cell wall formation. This is D-alanine--D-alanine ligase from Mycolicibacterium gilvum (strain PYR-GCK) (Mycobacterium gilvum (strain PYR-GCK)).